Here is a 269-residue protein sequence, read N- to C-terminus: MSSQQSSSIALRFEQLKREGRMALMPFLMAGDPDLSVTAEVLLSLQAAGADMVELGMPYSDPLADGPVIQAAAARALAAGTTPKKVLEMLSSLRGQLSIPVILFTYSNPLLNVGMERFCEQAAEAGASGLVVPDLPLEEAERLSPIAEREGLDLVLLVAPTTPTERMGRIAQSSRGFTYLVSVTGVTGERSTMETRVEGLVQALKQSSPVPVAVGFGISGVDQVRQVRSWGADGAIVGSALVKRMASASLGSVAAEAGLFCSELRKAAD.

Catalysis depends on proton acceptor residues Glu-54 and Asp-65.

The protein belongs to the TrpA family. As to quaternary structure, tetramer of two alpha and two beta chains.

It carries out the reaction (1S,2R)-1-C-(indol-3-yl)glycerol 3-phosphate + L-serine = D-glyceraldehyde 3-phosphate + L-tryptophan + H2O. It functions in the pathway amino-acid biosynthesis; L-tryptophan biosynthesis; L-tryptophan from chorismate: step 5/5. The alpha subunit is responsible for the aldol cleavage of indoleglycerol phosphate to indole and glyceraldehyde 3-phosphate. In Synechococcus sp. (strain CC9902), this protein is Tryptophan synthase alpha chain.